A 452-amino-acid polypeptide reads, in one-letter code: Pup--protein ligase (452 aa).

A Mg(2+)-binding site is contributed by E9. R53 contributes to the ATP binding site. Y55 serves as a coordination point for Mg(2+). The Proton acceptor role is filled by D57. E63 is a Mg(2+) binding site. Positions 66 and 419 each coordinate ATP.

Belongs to the Pup ligase/Pup deamidase family. Pup-conjugating enzyme subfamily.

The enzyme catalyses ATP + [prokaryotic ubiquitin-like protein]-L-glutamate + [protein]-L-lysine = ADP + phosphate + N(6)-([prokaryotic ubiquitin-like protein]-gamma-L-glutamyl)-[protein]-L-lysine.. The protein operates within protein degradation; proteasomal Pup-dependent pathway. It functions in the pathway protein modification; protein pupylation. Its function is as follows. Catalyzes the covalent attachment of the prokaryotic ubiquitin-like protein modifier Pup to the proteasomal substrate proteins, thereby targeting them for proteasomal degradation. This tagging system is termed pupylation. The ligation reaction involves the side-chain carboxylate of the C-terminal glutamate of Pup and the side-chain amino group of a substrate lysine. The sequence is that of Pup--protein ligase from Mycobacterium tuberculosis (strain KZN 1435 / MDR).